The sequence spans 625 residues: Branchpoint-bridging protein (625 aa).

Residues 1–16 are compositionally biased toward polar residues; sequence MSWRSNAQRTGMNAQP. Disordered stretches follow at residues 1–154 and 177–206; these read MSWR…AIGA and LRSGDFVPPDRERSPSPPPTYDNQGRRTNT. A compositionally biased stretch (gly residues) spans 22–31; sequence RWGGAGGAGE. Low complexity-rich tracts occupy residues 32–61, 70–91, and 110–130; these read GPSSSGSPPSSYHQPSHPYQSSYSHQSQPY, SSSSSSSNPRDAALAAAAAVAA, and SYAAPSLLTSASTADGSGADA. The span at 177–190 shows a compositional bias: basic and acidic residues; the sequence is LRSGDFVPPDRERS. The region spanning 253 to 330 is the KH domain; that stretch reads YLPIKEFPEI…ASVKKCIKLI (78 aa). 2 CCHC-type zinc fingers span residues 368–385 and 393–410; these read QLCKNCGNKGHRAFECPE and IICHRCGGQGHLARDCTQ. The tract at residues 466-533 is disordered; sequence GPDGKKIPPW…HAYHQQQQAY (68 aa). The span at 488–503 shows a compositional bias: gly residues; that stretch reads APRGGDAGRGGWGHRG. A compositionally biased stretch (low complexity) spans 516-533; sequence QHQQQQHPHAYHQQQQAY.

It belongs to the BBP/SF1 family.

It is found in the nucleus. In terms of biological role, necessary for the splicing of pre-mRNA. Has a role in the recognition of the branch site (5'-UACUAAC-3'), the pyrimidine tract and the 3'-splice site at the 3'-end of introns. This is Branchpoint-bridging protein (BBP) from Mycosarcoma maydis (Corn smut fungus).